Reading from the N-terminus, the 1140-residue chain is Eukaryotic translation initiation factor 3 subunit A (1140 aa).

In terms of domain architecture, PCI spans 319 to 501; the sequence is LQRMAAHVLL…NSIYFGTDLT (183 aa). 2 stretches are compositionally biased toward basic and acidic residues: residues 588 to 623 and 829 to 899; these read QNNA…EERE and AAEE…RGGD. 2 disordered regions span residues 588–630 and 829–1140; these read QNNA…HQNE and AAEE…VKRR. At Ser-908 the chain carries Phosphoserine. Basic and acidic residues-rich tracts occupy residues 920-976, 990-1051, 1059-1086, and 1109-1130; these read ERND…EPDS, SRDD…EPQR, DAPR…RGDQ, and TREE…KAGD.

This sequence belongs to the eIF-3 subunit A family. Component of the eukaryotic translation initiation factor 3 (eIF-3) complex. The eIF-3 complex interacts with pix.

Its subcellular location is the cytoplasm. RNA-binding component of the eukaryotic translation initiation factor 3 (eIF-3) complex, which is involved in protein synthesis of a specialized repertoire of mRNAs and, together with other initiation factors, stimulates binding of mRNA and methionyl-tRNAi to the 40S ribosome. The eIF-3 complex specifically targets and initiates translation of a subset of mRNAs involved in cell proliferation. The protein is Eukaryotic translation initiation factor 3 subunit A of Drosophila melanogaster (Fruit fly).